Consider the following 949-residue polypeptide: Glutamate receptor ionotropic, kainate 1 (949 aa).

A signal peptide spans 1-30 (MERSTVLIQPGLWTRDTSWTLLYFLCYILP). The Extracellular segment spans residues 31-576 (QTSPQVLRIG…VFSFLNPLSP (546 aa)). N-linked (GlcNAc...) asparagine glycans are attached at residues Asn-68, Asn-74, Asn-276, Asn-379, Asn-428, Asn-439, and Asn-446. The L-glutamate site is built by Pro-531, Thr-533, and Arg-538. Asn-561 is a glycosylation site (N-linked (GlcNAc...) asparagine). Residues 577-597 (DIWMYVLLACLGVSCVLFVIA) traverse the membrane as a helical segment. The Cytoplasmic portion of the chain corresponds to 598–653 (RFTPYEWYNPHPCNPDSDVVENNFTLLNSFWFGVGALMQQGSELMPKALSTRIVGG). The helical transmembrane segment at 654-674 (IWWFFTLIIISSYTANLAAFL) threads the bilayer. At 675-834 (TVERMESPID…KEASALGVEN (160 aa)) the chain is on the extracellular side. L-glutamate-binding residues include Ser-704 and Thr-705. Position 725 is a phosphoserine; by PKC (Ser-725). Glu-753 lines the L-glutamate pocket. A Phosphothreonine; by PKC modification is found at Thr-761. An intrachain disulfide couples Cys-765 to Cys-819. N-linked (GlcNAc...) asparagine glycosylation is present at Asn-766. A helical membrane pass occupies residues 835 to 855 (IGGIFIVLAAGLVLSVFVAIG). Over 856 to 949 (EFLYKSRKNN…RRTQRKETVA (94 aa)) the chain is Cytoplasmic.

The protein belongs to the glutamate-gated ion channel (TC 1.A.10.1) family. GRIK1 subfamily. Homotetramer or heterotetramer of pore-forming glutamate receptor subunits. Tetramers may be formed by the dimerization of dimers. Can form functional heteromeric receptors with GRIK4 and GRIK5. Interacts with KLHL17. In terms of tissue distribution, expressed in the olfactory bulb (at protein level). Expressed in subsets of neurons throughout the developing and adult central and peripheral nervous systems. In the CNS principally in the medial amygdaloid nuclei, medial habenulae, pyriform and cingulate cortices, and Purkinje cell layer. Also highly expressed in embryonic and adult dorsal root ganglia. Expressed at high levels in the trigeminal ganglion neurons.

It localises to the cell membrane. The protein localises to the postsynaptic cell membrane. It catalyses the reaction Ca(2+)(in) = Ca(2+)(out). Its function is as follows. Ionotropic glutamate receptor that functions as a cation-permeable ligand-gated ion channel, gated by L-glutamate and the glutamatergic agonist kainic acid. L-glutamate acts as an excitatory neurotransmitter at many synapses in the central nervous system. Binding of the excitatory neurotransmitter L-glutamate induces a conformation change, leading to the opening of the cation channel, and thereby converts the chemical signal to an electrical impulse. The receptor then desensitizes rapidly and enters a transient inactive state, characterized by the presence of bound agonist. The protein is Glutamate receptor ionotropic, kainate 1 (Grik1) of Rattus norvegicus (Rat).